The following is a 352-amino-acid chain: MLDRLSALEDRYEKLNDLLADPAIIKDTNQLREVSKEQSQLAPTVEVYRVYRDKMEAYQEARHMLTDPEMRDLAKEEVAVLEPEIKDLETKLKALLLPKDPNDDKNVIVEIRGAAGGDEAALFAGDLFKMYSKFAEKQNWKIEIIDASYTELGGYKEIIFIVKGSGAYSKLKYENGAHRVQRVPSTESGGRIHTSTATVAVLPEAEDVEVEIHDKDVRVDTFTSSGPGGQSVNTTQSAVRVTHVPTGIVASCQDEKSQIKNKEKAMKVLRARVYDKIQREQQAEYDEKRKSAVGTGDRSERIRTYNFAQNRVTDHRIGLTIQKLDRILQGEMDEVIDTLVMEYQARASEAAN.

Gln-230 is subject to N5-methylglutamine.

The protein belongs to the prokaryotic/mitochondrial release factor family. In terms of processing, methylated by PrmC. Methylation increases the termination efficiency of RF1.

The protein localises to the cytoplasm. Peptide chain release factor 1 directs the termination of translation in response to the peptide chain termination codons UAG and UAA. The chain is Peptide chain release factor 1 from Exiguobacterium sibiricum (strain DSM 17290 / CCUG 55495 / CIP 109462 / JCM 13490 / 255-15).